Consider the following 315-residue polypeptide: Tyrosine recombinase XerC (315 aa).

Residues Met-1–Val-103 enclose the Core-binding (CB) domain. In terms of domain architecture, Tyr recombinase spans Glu-124–Asp-306. Residues Arg-164, Lys-188, His-258, Arg-261, and His-284 contribute to the active site. Tyr-293 serves as the catalytic O-(3'-phospho-DNA)-tyrosine intermediate.

The protein belongs to the 'phage' integrase family. XerC subfamily. Forms a cyclic heterotetrameric complex composed of two molecules of XerC and two molecules of XerD.

Its subcellular location is the cytoplasm. In terms of biological role, site-specific tyrosine recombinase, which acts by catalyzing the cutting and rejoining of the recombining DNA molecules. The XerC-XerD complex is essential to convert dimers of the bacterial chromosome into monomers to permit their segregation at cell division. It also contributes to the segregational stability of plasmids. The sequence is that of Tyrosine recombinase XerC from Chlamydia muridarum (strain MoPn / Nigg).